The primary structure comprises 442 residues: UDP-N-acetylmuramoylalanine--D-glutamate ligase (442 aa).

109-115 lines the ATP pocket; it reads GSNGKTT.

Belongs to the MurCDEF family.

The protein localises to the cytoplasm. The catalysed reaction is UDP-N-acetyl-alpha-D-muramoyl-L-alanine + D-glutamate + ATP = UDP-N-acetyl-alpha-D-muramoyl-L-alanyl-D-glutamate + ADP + phosphate + H(+). The protein operates within cell wall biogenesis; peptidoglycan biosynthesis. Cell wall formation. Catalyzes the addition of glutamate to the nucleotide precursor UDP-N-acetylmuramoyl-L-alanine (UMA). The chain is UDP-N-acetylmuramoylalanine--D-glutamate ligase from Solibacter usitatus (strain Ellin6076).